Here is a 277-residue protein sequence, read N- to C-terminus: Knob-associated histidine-rich protein (277 aa).

2 disordered regions span residues 95–114 (DGSH…GYGY) and 162–277 (SSVN…KKKK). 2 stretches are compositionally biased toward basic and acidic residues: residues 169–190 (KHGD…EGEK) and 211–220 (KDNEDAESVK). A compositionally biased stretch (basic residues) spans 221–237 (SKKHKSHDCEKKKSKKH). Basic and acidic residues-rich tracts occupy residues 238-259 (KDNE…GEKH) and 268-277 (KTNEEKKKKK).

The protein localises to the secreted. Its function is as follows. KAHRP might mimick human histidine-rich glycoproteins to anchor host thrombospondin or a parasite analog in a binding complex with the endothelial cell receptor. This Plasmodium falciparum (isolate CDC / Honduras) protein is Knob-associated histidine-rich protein.